Consider the following 308-residue polypeptide: Homoserine O-acetyltransferase (308 aa).

Cys142 functions as the Acyl-thioester intermediate in the catalytic mechanism. Substrate is bound by residues Lys163 and Ser192. The Proton acceptor role is filled by His235. Glu237 is a catalytic residue. Arg249 is a substrate binding site.

It belongs to the MetA family.

It is found in the cytoplasm. It catalyses the reaction L-homoserine + acetyl-CoA = O-acetyl-L-homoserine + CoA. Its pathway is amino-acid biosynthesis; L-methionine biosynthesis via de novo pathway; O-acetyl-L-homoserine from L-homoserine: step 1/1. Its function is as follows. Transfers an acetyl group from acetyl-CoA to L-homoserine, forming acetyl-L-homoserine. The sequence is that of Homoserine O-acetyltransferase from Rhizobium rhizogenes (strain K84 / ATCC BAA-868) (Agrobacterium radiobacter).